Consider the following 67-residue polypeptide: Preprofallaxidin-1 (67 aa).

The first 22 residues, 1–22, serve as a signal peptide directing secretion; that stretch reads MASLKKSLFLVLFLGMVSLSIC. A propeptide spanning residues 23–46 is cleaved from the precursor; it reads DKEKREGENEEEEEEHEEESEEKR. The disordered stretch occupies residues 24–46; that stretch reads KEKREGENEEEEEEHEEESEEKR. Residues 30 to 42 show a composition bias toward acidic residues; that stretch reads ENEEEEEEHEEES.

In terms of tissue distribution, expressed by the skin glands.

The protein resides in the secreted. Fallaxidin-4.1 shows antibacterial activity against the Gram-positive bacteria L.lactis (MIC=12 uM), M.luteus (MIC=100 uM), S.epidermidis (MIC=100 uM) and S.uberis (MIC=50 uM). No antibacterial activity against the Gram-positive bacteria B.cereus, E.faecalis, L.innocua, S.aureus, or the Gram-negative bacteria E.cloacae and E.coli. Inhibits the formation of NO by neuronal nitric oxide synthase with an IC(50) of 13.3 uM. The chain is Preprofallaxidin-1 from Litoria fallax (Eastern dwarf tree frog).